Consider the following 400-residue polypeptide: CCA-adding enzyme (400 aa).

2 residues coordinate ATP: Gly28 and Arg31. CTP-binding residues include Gly28 and Arg31. Mg(2+) is bound by residues Asp41 and Asp43. ATP-binding residues include Arg112, Asp155, Arg158, Arg161, and Arg164. The CTP site is built by Arg112, Asp155, Arg158, Arg161, and Arg164.

The protein belongs to the tRNA nucleotidyltransferase/poly(A) polymerase family. Bacterial CCA-adding enzyme type 3 subfamily. Homodimer. Requires Mg(2+) as cofactor.

The catalysed reaction is a tRNA precursor + 2 CTP + ATP = a tRNA with a 3' CCA end + 3 diphosphate. The enzyme catalyses a tRNA with a 3' CCA end + 2 CTP + ATP = a tRNA with a 3' CCACCA end + 3 diphosphate. Its function is as follows. Catalyzes the addition and repair of the essential 3'-terminal CCA sequence in tRNAs without using a nucleic acid template. Adds these three nucleotides in the order of C, C, and A to the tRNA nucleotide-73, using CTP and ATP as substrates and producing inorganic pyrophosphate. tRNA 3'-terminal CCA addition is required both for tRNA processing and repair. Also involved in tRNA surveillance by mediating tandem CCA addition to generate a CCACCA at the 3' terminus of unstable tRNAs. While stable tRNAs receive only 3'-terminal CCA, unstable tRNAs are marked with CCACCA and rapidly degraded. This chain is CCA-adding enzyme, found in Staphylococcus aureus (strain COL).